Here is a 629-residue protein sequence, read N- to C-terminus: tRNA uridine 5-carboxymethylaminomethyl modification enzyme MnmG (629 aa).

FAD is bound by residues 14–19 (GAGHAG), V126, and S181. NAD(+) is bound at residue 273 to 287 (GPRYCPSIEDKVVRF). Residue Q370 participates in FAD binding.

Belongs to the MnmG family. As to quaternary structure, homodimer. Heterotetramer of two MnmE and two MnmG subunits. It depends on FAD as a cofactor.

The protein localises to the cytoplasm. NAD-binding protein involved in the addition of a carboxymethylaminomethyl (cmnm) group at the wobble position (U34) of certain tRNAs, forming tRNA-cmnm(5)s(2)U34. The protein is tRNA uridine 5-carboxymethylaminomethyl modification enzyme MnmG of Bacillus mycoides (strain KBAB4) (Bacillus weihenstephanensis).